Reading from the N-terminus, the 322-residue chain is tRNA-dihydrouridine synthase B (322 aa).

FMN is bound by residues 16 to 18 (PMA) and Gln70. Catalysis depends on Cys100, which acts as the Proton donor. FMN-binding positions include Lys139, 200–202 (NGD), and 224–225 (GR).

The protein belongs to the Dus family. DusB subfamily. FMN is required as a cofactor.

It catalyses the reaction a 5,6-dihydrouridine in tRNA + NAD(+) = a uridine in tRNA + NADH + H(+). The enzyme catalyses a 5,6-dihydrouridine in tRNA + NADP(+) = a uridine in tRNA + NADPH + H(+). Catalyzes the synthesis of 5,6-dihydrouridine (D), a modified base found in the D-loop of most tRNAs, via the reduction of the C5-C6 double bond in target uridines. This is tRNA-dihydrouridine synthase B from Shewanella oneidensis (strain ATCC 700550 / JCM 31522 / CIP 106686 / LMG 19005 / NCIMB 14063 / MR-1).